A 503-amino-acid polypeptide reads, in one-letter code: MVSIRPDEISSIIRQQIESYDQSVQVSNVGTVLQVGDGTARIYGLEQVMSQELLEFEDGTIGIALNLEEDNVGAVLMGDGFGIQEGSTVKTTGQIAQIPIGDAMVGRVVDSLGRPIDGKGPISSTATRLLESPAPGIIERKSVCEPMQTGITAIDAMIPIGRGQRELIIGDRKTGKTAIAIDTIINQKSEDVICVYVAIGQKASTVAQIIDTLTEKGAMAYTIVVAANANDPATLQYLAPYTGATLAEHFMYQGKSTLVIYDDLSKQAQAYRQMSLLMRRPPGREAYPGDVFYIHSRLLERAAKLSDALGGGSMTALPVIETQAGDVSAYIPTNVISITDGQIFLSTDLFNAGFRPAINAGISVSRVGSAAQTKAMKKVAGKLKLELAQFAELEAFSQFASDLDAATQAQLARGQRLRQLLKQPENSPLSVWEQVAISYAGLNGYIDTIPVDKVTEFAQGLRDYLKANKAKYVEIINSSKALTDEAETLLKEGIKEFTQGFAA.

Residue 170-177 coordinates ATP; it reads GDRKTGKT.

It belongs to the ATPase alpha/beta chains family. In terms of assembly, F-type ATPases have 2 components, CF(1) - the catalytic core - and CF(0) - the membrane proton channel. CF(1) has five subunits: alpha(3), beta(3), gamma(1), delta(1), epsilon(1). CF(0) has four main subunits: a(1), b(1), b'(1) and c(9-12).

It is found in the cellular thylakoid membrane. The catalysed reaction is ATP + H2O + 4 H(+)(in) = ADP + phosphate + 5 H(+)(out). Produces ATP from ADP in the presence of a proton gradient across the membrane. The alpha chain is a regulatory subunit. This chain is ATP synthase subunit alpha, found in Synechocystis sp. (strain ATCC 27184 / PCC 6803 / Kazusa).